Reading from the N-terminus, the 382-residue chain is tRNA-queuosine alpha-mannosyltransferase (382 aa).

The protein belongs to the glycosyltransferase group 1 family. Glycosyltransferase 4 subfamily.

It localises to the cytoplasm. The protein resides in the nucleus. The enzyme catalyses queuosine(34) in tRNA(Asp) + GDP-alpha-D-mannose = O-4''-alpha-D-mannosylqueuosine(34) in tRNA(Asp) + GDP + H(+). Glycosyltransferase that specifically catalyzes mannosylation of cytoplasmic tRNA(Asp) modified with queuosine at position 34 (queuosine(34)). Mannosylates the cyclopentene moiety of queuosine(34) in tRNA(Asp) to form mannosyl-queuosine(34). Mannosylation of queuosine(34) in tRNA(Asp) is required to slow-down elongation at cognate codons, GAC and GAU, thereby regulating protein translation. This is tRNA-queuosine alpha-mannosyltransferase (GTDC1) from Gallus gallus (Chicken).